The following is a 93-amino-acid chain: Integration host factor subunit beta (93 aa).

Belongs to the bacterial histone-like protein family. Heterodimer of an alpha and a beta chain.

In terms of biological role, this protein is one of the two subunits of integration host factor, a specific DNA-binding protein that functions in genetic recombination as well as in transcriptional and translational control. The chain is Integration host factor subunit beta from Vibrio vulnificus (strain YJ016).